The chain runs to 133 residues: Large ribosomal subunit protein eL32y (133 aa).

Belongs to the eukaryotic ribosomal protein eL32 family.

This chain is Large ribosomal subunit protein eL32y (RPL32B), found in Arabidopsis thaliana (Mouse-ear cress).